The following is a 433-amino-acid chain: 23S rRNA (uracil(1939)-C(5))-methyltransferase RlmD (433 aa).

One can recognise a TRAM domain in the interval 10–68 (RTTTRQIITVSVNDLDSFGQGVARHNGKTLFIPGLLPQENAEVTVTEDKKQYARAKVVR). [4Fe-4S] cluster is bound by residues cysteine 81, cysteine 87, cysteine 90, and cysteine 162. Glutamine 265, phenylalanine 294, asparagine 299, glutamate 315, asparagine 342, and aspartate 363 together coordinate S-adenosyl-L-methionine. The Nucleophile role is filled by cysteine 389.

It belongs to the class I-like SAM-binding methyltransferase superfamily. RNA M5U methyltransferase family. RlmD subfamily.

It catalyses the reaction uridine(1939) in 23S rRNA + S-adenosyl-L-methionine = 5-methyluridine(1939) in 23S rRNA + S-adenosyl-L-homocysteine + H(+). Catalyzes the formation of 5-methyl-uridine at position 1939 (m5U1939) in 23S rRNA. This Shigella sonnei (strain Ss046) protein is 23S rRNA (uracil(1939)-C(5))-methyltransferase RlmD.